The following is a 254-amino-acid chain: 3-deoxy-manno-octulosonate cytidylyltransferase (254 aa).

This sequence belongs to the KdsB family.

Its subcellular location is the cytoplasm. It carries out the reaction 3-deoxy-alpha-D-manno-oct-2-ulosonate + CTP = CMP-3-deoxy-beta-D-manno-octulosonate + diphosphate. Its pathway is nucleotide-sugar biosynthesis; CMP-3-deoxy-D-manno-octulosonate biosynthesis; CMP-3-deoxy-D-manno-octulosonate from 3-deoxy-D-manno-octulosonate and CTP: step 1/1. The protein operates within bacterial outer membrane biogenesis; lipopolysaccharide biosynthesis. Activates KDO (a required 8-carbon sugar) for incorporation into bacterial lipopolysaccharide in Gram-negative bacteria. The protein is 3-deoxy-manno-octulosonate cytidylyltransferase of Haemophilus influenzae (strain 86-028NP).